We begin with the raw amino-acid sequence, 330 residues long: tRNA-modifying protein YgfZ (330 aa).

The folate site is built by tryptophan 28 and tryptophan 190.

It belongs to the tRNA-modifying YgfZ family.

Its subcellular location is the cytoplasm. Functionally, folate-binding protein involved in regulating the level of ATP-DnaA and in the modification of some tRNAs. It is probably a key factor in regulatory networks that act via tRNA modification, such as initiation of chromosomal replication. This Serratia proteamaculans (strain 568) protein is tRNA-modifying protein YgfZ.